A 307-amino-acid chain; its full sequence is Stage III sporulation protein AA (307 aa).

143-150 lines the ATP pocket; it reads GPPQTGKT.

This is Stage III sporulation protein AA (spoIIIAA) from Bacillus subtilis (strain 168).